A 96-amino-acid chain; its full sequence is Co-chaperonin GroES (96 aa).

The protein belongs to the GroES chaperonin family. As to quaternary structure, heptamer of 7 subunits arranged in a ring. Interacts with the chaperonin GroEL.

The protein resides in the cytoplasm. Its function is as follows. Together with the chaperonin GroEL, plays an essential role in assisting protein folding. The GroEL-GroES system forms a nano-cage that allows encapsulation of the non-native substrate proteins and provides a physical environment optimized to promote and accelerate protein folding. GroES binds to the apical surface of the GroEL ring, thereby capping the opening of the GroEL channel. This chain is Co-chaperonin GroES, found in Trichlorobacter lovleyi (strain ATCC BAA-1151 / DSM 17278 / SZ) (Geobacter lovleyi).